The sequence spans 151 residues: Deoxyuridine 5'-triphosphate nucleotidohydrolase (151 aa).

Substrate is bound by residues R70–G72, N83, L87–D89, and M97.

This sequence belongs to the dUTPase family. Mg(2+) is required as a cofactor.

It catalyses the reaction dUTP + H2O = dUMP + diphosphate + H(+). The protein operates within pyrimidine metabolism; dUMP biosynthesis; dUMP from dCTP (dUTP route): step 2/2. In terms of biological role, this enzyme is involved in nucleotide metabolism: it produces dUMP, the immediate precursor of thymidine nucleotides and it decreases the intracellular concentration of dUTP so that uracil cannot be incorporated into DNA. The polypeptide is Deoxyuridine 5'-triphosphate nucleotidohydrolase (Psychromonas ingrahamii (strain DSM 17664 / CCUG 51855 / 37)).